Here is a 376-residue protein sequence, read N- to C-terminus: Proton extrusion protein PxcA (376 aa).

A run of 4 helical transmembrane segments spans residues 150 to 170 (TLIS…VQQM), 251 to 271 (AVKN…VCII), 299 to 319 (IILF…QVLL), and 334 to 354 (FILL…KYWI).

Belongs to the CemA family.

It localises to the cell inner membrane. Required for H(+) efflux immediately after light irradiation to form a rapid H(+) concentration gradient across the thylakoid membranes. Together with PxcL, contributes to transient H(+) uptake following dark to light transition. The sequence is that of Proton extrusion protein PxcA from Prochlorococcus marinus (strain MIT 9303).